Reading from the N-terminus, the 309-residue chain is Porphobilinogen deaminase (309 aa).

The residue at position 241 (Cys241) is an S-(dipyrrolylmethanemethyl)cysteine.

The protein belongs to the HMBS family. In terms of assembly, monomer. Dipyrromethane is required as a cofactor.

The catalysed reaction is 4 porphobilinogen + H2O = hydroxymethylbilane + 4 NH4(+). The protein operates within porphyrin-containing compound metabolism; protoporphyrin-IX biosynthesis; coproporphyrinogen-III from 5-aminolevulinate: step 2/4. Its function is as follows. Tetrapolymerization of the monopyrrole PBG into the hydroxymethylbilane pre-uroporphyrinogen in several discrete steps. The chain is Porphobilinogen deaminase from Bacillus cereus (strain ATCC 10987 / NRS 248).